We begin with the raw amino-acid sequence, 365 residues long: Chorismate synthase (365 aa).

Residue Arg46 coordinates NADP(+). Residues 123 to 125 (RSS), 241 to 242 (NG), Gly281, 296 to 300 (KPTPS), and Arg322 contribute to the FMN site.

This sequence belongs to the chorismate synthase family. As to quaternary structure, homotetramer. FMNH2 is required as a cofactor.

It catalyses the reaction 5-O-(1-carboxyvinyl)-3-phosphoshikimate = chorismate + phosphate. It functions in the pathway metabolic intermediate biosynthesis; chorismate biosynthesis; chorismate from D-erythrose 4-phosphate and phosphoenolpyruvate: step 7/7. Catalyzes the anti-1,4-elimination of the C-3 phosphate and the C-6 proR hydrogen from 5-enolpyruvylshikimate-3-phosphate (EPSP) to yield chorismate, which is the branch point compound that serves as the starting substrate for the three terminal pathways of aromatic amino acid biosynthesis. This reaction introduces a second double bond into the aromatic ring system. The polypeptide is Chorismate synthase (Helicobacter pylori (strain Shi470)).